We begin with the raw amino-acid sequence, 314 residues long: ATP synthase gamma chain (314 aa).

It belongs to the ATPase gamma chain family. In terms of assembly, F-type ATPases have 2 components, CF(1) - the catalytic core - and CF(0) - the membrane proton channel. CF(1) has five subunits: alpha(3), beta(3), gamma(1), delta(1), epsilon(1). CF(0) has three main subunits: a, b and c.

The protein localises to the cellular thylakoid membrane. Its function is as follows. Produces ATP from ADP in the presence of a proton gradient across the membrane. The gamma chain is believed to be important in regulating ATPase activity and the flow of protons through the CF(0) complex. In Crocosphaera subtropica (strain ATCC 51142 / BH68) (Cyanothece sp. (strain ATCC 51142)), this protein is ATP synthase gamma chain.